The chain runs to 333 residues: Ketol-acid reductoisomerase (NAD(P)(+)) (333 aa).

The 181-residue stretch at 2–182 (AKIYYDEDAS…GATRAGVIET (181 aa)) folds into the KARI N-terminal Rossmann domain. NADP(+) contacts are provided by residues 25-28 (YGSQ), serine 51, and 83-86 (DTVQ). Residue histidine 108 is part of the active site. An NADP(+)-binding site is contributed by glycine 134. Positions 183–327 (TFREETETDL…KELRQMMPWL (145 aa)) constitute a KARI C-terminal knotted domain. Residues aspartate 191, glutamate 195, glutamate 227, and glutamate 231 each coordinate Mg(2+). Serine 252 lines the substrate pocket.

This sequence belongs to the ketol-acid reductoisomerase family. Mg(2+) serves as cofactor.

The enzyme catalyses (2R)-2,3-dihydroxy-3-methylbutanoate + NAD(+) = (2S)-2-acetolactate + NADH + H(+). It catalyses the reaction (2R)-2,3-dihydroxy-3-methylbutanoate + NADP(+) = (2S)-2-acetolactate + NADPH + H(+). The protein operates within amino-acid biosynthesis; L-isoleucine biosynthesis; L-isoleucine from 2-oxobutanoate: step 2/4. It participates in amino-acid biosynthesis; L-valine biosynthesis; L-valine from pyruvate: step 2/4. Functionally, involved in the biosynthesis of branched-chain amino acids (BCAA). Catalyzes an alkyl-migration followed by a ketol-acid reduction of (S)-2-acetolactate (S2AL) to yield (R)-2,3-dihydroxy-isovalerate. In the isomerase reaction, S2AL is rearranged via a Mg-dependent methyl migration to produce 3-hydroxy-3-methyl-2-ketobutyrate (HMKB). In the reductase reaction, this 2-ketoacid undergoes a metal-dependent reduction by NADPH or NADH to yield (R)-2,3-dihydroxy-isovalerate. The polypeptide is Ketol-acid reductoisomerase (NAD(P)(+)) (Hydrogenobaculum sp. (strain Y04AAS1)).